We begin with the raw amino-acid sequence, 272 residues long: Phosphoglycolate phosphatase (272 aa).

Asp-19 (nucleophile) is an active-site residue. Mg(2+) is bound by residues Asp-19, Asp-21, and Asp-182.

The protein belongs to the HAD-like hydrolase superfamily. CbbY/CbbZ/Gph/YieH family. Mg(2+) is required as a cofactor.

It catalyses the reaction 2-phosphoglycolate + H2O = glycolate + phosphate. Its pathway is organic acid metabolism; glycolate biosynthesis; glycolate from 2-phosphoglycolate: step 1/1. In terms of biological role, specifically catalyzes the dephosphorylation of 2-phosphoglycolate. Is involved in the dissimilation of the intracellular 2-phosphoglycolate formed during the DNA repair of 3'-phosphoglycolate ends, a major class of DNA lesions induced by oxidative stress. In Pseudomonas syringae pv. syringae (strain B728a), this protein is Phosphoglycolate phosphatase.